A 392-amino-acid polypeptide reads, in one-letter code: ATP phosphoribosyltransferase regulatory subunit (392 aa).

This sequence belongs to the class-II aminoacyl-tRNA synthetase family. HisZ subfamily. In terms of assembly, heteromultimer composed of HisG and HisZ subunits.

The protein resides in the cytoplasm. The protein operates within amino-acid biosynthesis; L-histidine biosynthesis; L-histidine from 5-phospho-alpha-D-ribose 1-diphosphate: step 1/9. In terms of biological role, required for the first step of histidine biosynthesis. May allow the feedback regulation of ATP phosphoribosyltransferase activity by histidine. This Listeria monocytogenes serotype 4b (strain F2365) protein is ATP phosphoribosyltransferase regulatory subunit.